Consider the following 213-residue polypeptide: Cytidylate kinase (213 aa).

An ATP-binding site is contributed by 9–17 (GPAASGKGT).

Belongs to the cytidylate kinase family. Type 1 subfamily.

It localises to the cytoplasm. The catalysed reaction is CMP + ATP = CDP + ADP. The enzyme catalyses dCMP + ATP = dCDP + ADP. The protein is Cytidylate kinase of Caulobacter vibrioides (strain ATCC 19089 / CIP 103742 / CB 15) (Caulobacter crescentus).